Consider the following 248-residue polypeptide: 2,3-bisphosphoglycerate-dependent phosphoglycerate mutase (248 aa).

Substrate-binding positions include 8-15, 21-22, Arg-60, 87-90, Lys-98, 114-115, and 183-184; these read RHGESTWN, TG, ERHY, RR, and GN. The Tele-phosphohistidine intermediate role is filled by His-9. The Proton donor/acceptor role is filled by Glu-87.

This sequence belongs to the phosphoglycerate mutase family. BPG-dependent PGAM subfamily.

It carries out the reaction (2R)-2-phosphoglycerate = (2R)-3-phosphoglycerate. It functions in the pathway carbohydrate degradation; glycolysis; pyruvate from D-glyceraldehyde 3-phosphate: step 3/5. Catalyzes the interconversion of 2-phosphoglycerate and 3-phosphoglycerate. This is 2,3-bisphosphoglycerate-dependent phosphoglycerate mutase from Solibacter usitatus (strain Ellin6076).